Here is a 364-residue protein sequence, read N- to C-terminus: Mitoferrin-2 (364 aa).

Residues 1-17 show a composition bias toward gly residues; sequence MELEGRGAGGVAGGPAA. 2 disordered regions span residues 1-28 and 40-60; these read MELE…ESAL and GAGG…PDSG. A compositionally biased stretch (low complexity) spans 18–27; it reads GPGRSPGESA. 3 Solcar repeats span residues 70–158, 168–252, and 259–352; these read ATVT…LKKT, NSHI…LQEH, and YNPS…FKYL. The next 6 membrane-spanning stretches (helical) occupy residues 72–91, 133–152, 170–189, 227–246, 261–280, and 327–346; these read VTTH…CVMY, GLNV…FACY, HIAN…AAMN, SYTT…FMTY, PSSH…AATT, and GVQA…WSVY.

It belongs to the mitochondrial carrier (TC 2.A.29) family. Ubiquitous. Expressed in placenta, lung, kidney, pancreas, liver, brain, skeletal muscle and heart.

The protein resides in the mitochondrion inner membrane. The enzyme catalyses Fe(2+)(in) = Fe(2+)(out). Its function is as follows. Mitochondrial iron transporter that mediates iron uptake. Probably required for heme synthesis of hemoproteins and Fe-S cluster assembly in non-erythroid cells. The sequence is that of Mitoferrin-2 (SLC25A28) from Homo sapiens (Human).